We begin with the raw amino-acid sequence, 172 residues long: Protein-export protein SecB (172 aa).

Residues 152–172 (AQGAEGGNSGIVMPDGSQARH) form a disordered region.

Belongs to the SecB family. In terms of assembly, homotetramer, a dimer of dimers. One homotetramer interacts with 1 SecA dimer.

It localises to the cytoplasm. In terms of biological role, one of the proteins required for the normal export of preproteins out of the cell cytoplasm. It is a molecular chaperone that binds to a subset of precursor proteins, maintaining them in a translocation-competent state. It also specifically binds to its receptor SecA. This is Protein-export protein SecB from Cupriavidus necator (strain ATCC 17699 / DSM 428 / KCTC 22496 / NCIMB 10442 / H16 / Stanier 337) (Ralstonia eutropha).